A 221-amino-acid polypeptide reads, in one-letter code: Large ribosomal subunit protein uL3 (221 aa).

Belongs to the universal ribosomal protein uL3 family. In terms of assembly, part of the 50S ribosomal subunit. Forms a cluster with proteins L14 and L19.

Functionally, one of the primary rRNA binding proteins, it binds directly near the 3'-end of the 23S rRNA, where it nucleates assembly of the 50S subunit. This Chlamydia muridarum (strain MoPn / Nigg) protein is Large ribosomal subunit protein uL3.